Consider the following 377-residue polypeptide: Spore coat protein SA (377 aa).

The protein belongs to the glycosyltransferase group 1 family. Glycosyltransferase 4 subfamily.

The chain is Spore coat protein SA (cotSA) from Bacillus subtilis (strain 168).